The sequence spans 390 residues: 23S rRNA (uracil(747)-C(5))-methyltransferase RlmC (390 aa).

Cys12, Cys20, Cys23, and Cys100 together coordinate [4Fe-4S] cluster. S-adenosyl-L-methionine is bound by residues Gln225, Phe254, Glu275, and Asn322. Cys349 acts as the Nucleophile in catalysis.

Belongs to the class I-like SAM-binding methyltransferase superfamily. RNA M5U methyltransferase family. RlmC subfamily.

It catalyses the reaction uridine(747) in 23S rRNA + S-adenosyl-L-methionine = 5-methyluridine(747) in 23S rRNA + S-adenosyl-L-homocysteine + H(+). Functionally, catalyzes the formation of 5-methyl-uridine at position 747 (m5U747) in 23S rRNA. The polypeptide is 23S rRNA (uracil(747)-C(5))-methyltransferase RlmC (Shewanella baltica (strain OS223)).